A 431-amino-acid chain; its full sequence is Pachytene checkpoint protein 2 homolog (431 aa).

Position 1 is an N-acetylmethionine (methionine 1). 179–186 (GPPGTGKT) provides a ligand contact to ATP.

It belongs to the AAA ATPase family. PCH2 subfamily. Specifically interacts with the ligand binding domain of the thyroid receptor (TR). This interaction does not require the presence of thyroid hormone for its interaction. Interacts with proteasome subunit PSMA8; to participate in meiosis progression during spermatogenesis.

In terms of biological role, plays a key role in chromosome recombination and chromosome structure development during meiosis. Required at early steps in meiotic recombination that leads to non-crossovers pathways. Also needed for efficient completion of homologous synapsis by influencing crossover distribution along the chromosomes affecting both crossovers and non-crossovers pathways. Also required for development of higher-order chromosome structures and is needed for synaptonemal-complex formation. In males, required for efficient synapsis of the sex chromosomes and for sex body formation. Promotes early steps of the DNA double-strand breaks (DSBs) repair process upstream of the assembly of RAD51 complexes. Required for depletion of HORMAD1 and HORMAD2 from synapsed chromosomes. Plays a role in mitotic spindle assembly checkpoint (SAC) activation. In Sus scrofa (Pig), this protein is Pachytene checkpoint protein 2 homolog (TRIP13).